A 198-amino-acid polypeptide reads, in one-letter code: Recombination protein RecR (198 aa).

The C4-type zinc-finger motif lies at cysteine 57–cysteine 72. A Toprim domain is found at alanine 80–proline 175.

This sequence belongs to the RecR family.

Functionally, may play a role in DNA repair. It seems to be involved in an RecBC-independent recombinational process of DNA repair. It may act with RecF and RecO. This Herminiimonas arsenicoxydans protein is Recombination protein RecR.